A 219-amino-acid polypeptide reads, in one-letter code: Histone H1.4 (219 aa).

Positions 1 to 15 (MSETAPAAPAAPAPA) are enriched in low complexity. A disordered region spans residues 1-41 (MSETAPAAPAAPAPAEKTPVKKKARKAAGGAKRKTSGPPVS). Serine 2 bears the N-acetylserine mark. Position 2 is a phosphoserine (serine 2). At lysine 17 the chain carries N6-acetyllysine. Threonine 18 carries the post-translational modification Phosphothreonine. The segment covering 20–35 (VKKKARKAAGGAKRKT) has biased composition (basic residues). Lysine 26 carries the post-translational modification N6-acetyllysine; alternate. N6-methyllysine; alternate is present on lysine 26. The residue at position 34 (lysine 34) is an N6-(beta-hydroxybutyryl)lysine; alternate. Lysine 34 carries the N6-succinyllysine; alternate modification. Residue serine 36 is modified to Phosphoserine. Residues 36 to 109 (SGPPVSELIT…GASGSFKLNK (74 aa)) form the H15 domain. Lysine 52 carries the post-translational modification N6-(beta-hydroxybutyryl)lysine. Residue arginine 54 is modified to Citrulline. Residues lysine 64, lysine 85, lysine 90, and lysine 106 each carry the N6-(beta-hydroxybutyryl)lysine modification. A disordered region spans residues 92–219 (TLVQTKGTGA…KPKKTAAKKK (128 aa)). Basic residues predominate over residues 119-140 (KAKRAGAAKAKKPAGAAKKPKK). At threonine 146 the chain carries Phosphothreonine. 2 stretches are compositionally biased toward basic residues: residues 149–160 (KSTKKTPKKAKK) and 168–185 (KKAKSPKKAKATKAKKAP). Serine 150 carries the ADP-ribosylserine modification. Serine 187 is modified (phosphoserine). Positions 192-219 (KTVKPKAAKPKTSKPKAAKPKKTAAKKK) are enriched in basic residues.

This sequence belongs to the histone H1/H5 family. In terms of processing, citrullination at Arg-54 (H1R54ci) by PADI4 takes place within the DNA-binding site of H1 and results in its displacement from chromatin and global chromatin decondensation, thereby promoting pluripotency and stem cell maintenance. Post-translationally, ADP-ribosylated on Ser-55, Ser-113 and Ser-150 in response to DNA damage. H1 histones are progressively phosphorylated during the cell cycle, becoming maximally phosphorylated during late G2 phase and M phase, and being dephosphorylated sharply thereafter. In terms of processing, acetylated at Lys-26. Deacetylated at Lys-26 by SIRT1. Post-translationally, hydroxybutyrylation of histones is induced by starvation.

It is found in the nucleus. It localises to the chromosome. Its function is as follows. Histone H1 protein binds to linker DNA between nucleosomes forming the macromolecular structure known as the chromatin fiber. Histones H1 are necessary for the condensation of nucleosome chains into higher-order structured fibers. Also acts as a regulator of individual gene transcription through chromatin remodeling, nucleosome spacing and DNA methylation. The protein is Histone H1.4 of Mus musculus (Mouse).